A 507-amino-acid polypeptide reads, in one-letter code: Histone-lysine N-methyltransferase set-18 (507 aa).

The Zn(2+) site is built by Cys49, Cys52, Cys65, Cys68, Cys74, Cys78, His86, and Cys90. An MYND-type zinc finger spans residues 49–90 (CANCLRGPAPGEKLLRCGGCNFSMYCSKECQATAWLVHKPEC).

Belongs to the class V-like SAM-binding methyltransferase superfamily. Histone-lysine methyltransferase family. In terms of tissue distribution, expressed in pharyngeal and body wall muscles.

It catalyses the reaction L-lysyl(36)-[histone H3] + 2 S-adenosyl-L-methionine = N(6),N(6)-dimethyl-L-lysyl(36)-[histone H3] + 2 S-adenosyl-L-homocysteine + 2 H(+). Its function is as follows. Histone methyltransferase. Specifically methylates 'Lys-36' of histone H3, inducing di-methylation. Plays a role in modulating lifespan and oxidative stress resistance, in a manner dependent upon daf-16/Forkhead box protein O and the Insulin/IGF-1-like signaling (IIS) mediated pathway. Represses transcription of daf-16 isoform a, perhaps by methylating histone H3 at the daf-16 promoter, which in turn leads to recruitment of histone deacetylases and thus modulation of expression. The polypeptide is Histone-lysine N-methyltransferase set-18 (Caenorhabditis elegans).